A 227-amino-acid chain; its full sequence is Lipoprotein-releasing system ATP-binding protein LolD (227 aa).

Residues 6-227 enclose the ABC transporter domain; the sequence is LTSQKLYKSY…LHEGSLYARE (222 aa). 42-49 serves as a coordination point for ATP; that stretch reads GPSGSGKS.

The protein belongs to the ABC transporter superfamily. Lipoprotein translocase (TC 3.A.1.125) family. The complex is composed of two ATP-binding proteins (LolD) and two transmembrane proteins (LolC and LolE).

The protein localises to the cell inner membrane. Its function is as follows. Part of the ABC transporter complex LolCDE involved in the translocation of mature outer membrane-directed lipoproteins, from the inner membrane to the periplasmic chaperone, LolA. Responsible for the formation of the LolA-lipoprotein complex in an ATP-dependent manner. The protein is Lipoprotein-releasing system ATP-binding protein LolD of Legionella pneumophila (strain Paris).